The sequence spans 572 residues: BOS complex subunit ncln (572 aa).

Residues 1–35 (MFEEAGEVLENMLKVSFPLSLVLFLVLVCPLRAEA) form the signal peptide. The Extracellular segment spans residues 36 to 530 (AHEFSVYRMQ…TMNAYRVKPA (495 aa)). 3 N-linked (GlcNAc...) asparagine glycosylation sites follow: Asn-108, Asn-234, and Asn-436. Residues 531 to 551 (IFDLLLAVCIASYLGVLYLAI) form a helical membrane-spanning segment. Over 552 to 572 (QNFGLLYGFLRRVTAPRVKQH) the chain is Cytoplasmic.

It belongs to the nicastrin family. As to quaternary structure, component of the multi-pass translocon (MPT) complex.

It localises to the endoplasmic reticulum membrane. Component of the multi-pass translocon (MPT) complex that mediates insertion of multi-pass membrane proteins into the lipid bilayer of membranes. The MPT complex takes over after the SEC61 complex: following membrane insertion of the first few transmembrane segments of proteins by the SEC61 complex, the MPT complex occludes the lateral gate of the SEC61 complex to promote insertion of subsequent transmembrane regions. Antagonizes Nodal signaling and subsequent organization of axial structures during mesodermal patterning. Ectopic expression results in cyclopia, due to a defect in mesendoderm patterning. This is BOS complex subunit ncln (ncln) from Danio rerio (Zebrafish).